The chain runs to 504 residues: Sucrose phosphorylase (504 aa).

Residue Asp-50 participates in substrate binding. Residues His-88, 190 to 192 (RLD), Glu-232, 289 to 290 (HD), 342 to 345 (DLYQ), and Arg-399 contribute to the sucrose site. Catalysis depends on Asp-192, which acts as the Nucleophile. Glu-232 serves as the catalytic Proton donor.

The protein belongs to the glycosyl hydrolase 13 family. Sucrose phosphorylase subfamily. In terms of assembly, homodimer.

It carries out the reaction sucrose + phosphate = D-fructose + alpha-D-glucose 1-phosphate. Catalyzes the reversible phosphorolysis of sucrose into alpha-D-glucose 1-phosphate (Glc1P) and D-fructose. Is involved in sucrose degradation. Also displays transglucosylation activity in vitro, by transferring the glucosyl moiety of Glc1P to a broad range of monomeric sugars, such as D- and L-arabinose, D- and L-arabitol, and xylitol. In Bifidobacterium adolescentis (strain ATCC 15703 / DSM 20083 / NCTC 11814 / E194a), this protein is Sucrose phosphorylase.